A 455-amino-acid chain; its full sequence is Probable carboxypeptidase MCYG_07204 (455 aa).

The signal sequence occupies residues 1-21 (MQKTYLLALLVSSLASVRSLA). N93 carries N-linked (GlcNAc...) asparagine glycosylation. A Zn(2+)-binding site is contributed by D170. The Proton acceptor role is filled by E202. Position 203 (E203) interacts with Zn(2+). N390 carries N-linked (GlcNAc...) asparagine glycosylation.

Belongs to the peptidase M20A family. Requires Zn(2+) as cofactor.

The protein resides in the secreted. The sequence is that of Probable carboxypeptidase MCYG_07204 from Arthroderma otae (strain ATCC MYA-4605 / CBS 113480) (Microsporum canis).